The following is a 196-amino-acid chain: Charged multivesicular body protein 1a (196 aa).

Met-1 is modified (N-acetylmethionine). The stretch at 5–42 (LFQLKFTAKQLEKLAKKAEKDSKAEQAKVKKALQQKNV) forms a coiled coil. Ser-101 carries the post-translational modification Phosphoserine. A coiled-coil region spans residues 102-124 (AMDLQKVSAVMDRFEQQVQNLDV). Ser-173 carries the post-translational modification Phosphoserine. Positions 185–195 (DQLSRRLAALR) match the MIT-interacting motif motif.

The protein belongs to the SNF7 family. Probable peripherally associated component of the endosomal sorting required for transport complex III (ESCRT-III). ESCRT-III components are thought to multimerize to form a flat lattice on the perimeter membrane of the endosome. Several assembly forms of ESCRT-III may exist that interact and act sequentially. Self-associates. Interacts with CHMP1B. Interacts with VPS4A. Interacts with VPS4B. Interacts with PHF1. Interacts with IST1. Interacts with MITD1. Highly expressed in adult heart, kidney and liver. Expressed at lower levels in adult colon, spleen, lung, brain, testis and muscle. Also expressed in myoblasts and embryo fibroblasts.

The protein resides in the cytoplasm. Its subcellular location is the endosome membrane. It is found in the nucleus matrix. Functionally, probable peripherally associated component of the endosomal sorting required for transport complex III (ESCRT-III) which is involved in multivesicular bodies (MVBs) formation and sorting of endosomal cargo proteins into MVBs. MVBs contain intraluminal vesicles (ILVs) that are generated by invagination and scission from the limiting membrane of the endosome and mostly are delivered to lysosomes enabling degradation of membrane proteins, such as stimulated growth factor receptors, lysosomal enzymes and lipids. The MVB pathway appears to require the sequential function of ESCRT-O, -I,-II and -III complexes. ESCRT-III proteins mostly dissociate from the invaginating membrane before the ILV is released. The ESCRT machinery also functions in topologically equivalent membrane fission events, such as the terminal stages of cytokinesis. ESCRT-III proteins are believed to mediate the necessary vesicle extrusion and/or membrane fission activities, possibly in conjunction with the AAA ATPase VPS4. Involved in cytokinesis. Involved in recruiting VPS4A and/or VPS4B to the midbody of dividing cells. May also be involved in chromosome condensation. Targets the Polycomb group (PcG) protein BMI1/PCGF4 to regions of condensed chromatin. May play a role in stable cell cycle progression and in PcG gene silencing. In Mus musculus (Mouse), this protein is Charged multivesicular body protein 1a (Chmp1a).